A 98-amino-acid chain; its full sequence is Cobalt transport protein CbiN (98 aa).

Helical transmembrane passes span 6 to 26 (VLMI…YSGL) and 68 to 88 (SLLF…FFGY).

The protein belongs to the CbiN family. As to quaternary structure, forms an energy-coupling factor (ECF) transporter complex composed of an ATP-binding protein (A component, CbiO), a transmembrane protein (T component, CbiQ) and 2 possible substrate-capture proteins (S components, CbiM and CbiN) of unknown stoichimetry.

The protein localises to the cell membrane. It functions in the pathway cofactor biosynthesis; adenosylcobalamin biosynthesis. Functionally, part of the energy-coupling factor (ECF) transporter complex CbiMNOQ involved in cobalt import. The sequence is that of Cobalt transport protein CbiN from Methanococcus maripaludis (strain DSM 14266 / JCM 13030 / NBRC 101832 / S2 / LL).